The sequence spans 132 residues: N,N-dimethylformamidase alpha subunit (132 aa).

As to quaternary structure, heterotetramer of two DmfA1 (alpha) and two DmfA2 (beta) subunits.

The catalysed reaction is N,N-dimethylformamide + H2O = dimethylamine + formate. Its activity is regulated as follows. Activity is slightly inhibited by Mg(2+) and Mn(2+), and slightly increased by Cu(2+). Activity is slightly inhibited by the chelating agents 8-hydroxyquinoline, ethylenediaminetetraacetate, o-phenanthroline and 2,2'-bipyridyl. Functionally, hydrolyzes N,N-dimethylformamide, and to a lesser extent N,N-dimethylacetamide and N,N-diethylacetamide. Has no activity against the substituted amides N-methylformamide, N-ethylformamide, N-ethylformamide and N-methylacetamide or the unsubstituted amides formamide, nicotinamide, acetoamide, benzamide, acetamide and acrylamide. This chain is N,N-dimethylformamidase alpha subunit, found in Alcaligenes sp.